Consider the following 293-residue polypeptide: tRNA pseudouridine synthase B (293 aa).

D38 functions as the Nucleophile in the catalytic mechanism.

This sequence belongs to the pseudouridine synthase TruB family. Type 1 subfamily.

The catalysed reaction is uridine(55) in tRNA = pseudouridine(55) in tRNA. Functionally, responsible for synthesis of pseudouridine from uracil-55 in the psi GC loop of transfer RNAs. In Trichormus variabilis (strain ATCC 29413 / PCC 7937) (Anabaena variabilis), this protein is tRNA pseudouridine synthase B.